Reading from the N-terminus, the 20-residue chain is 39 kDa major outer membrane protein (20 aa).

It localises to the cell outer membrane. The protein is 39 kDa major outer membrane protein of Aggregatibacter actinomycetemcomitans (Actinobacillus actinomycetemcomitans).